The following is a 115-amino-acid chain: MKKAMAILAVLAAAAVICGLLFFHNDVTDRFNPFIHQQDVYVQIDRDGRHLSPGGTEYTLDGYNASGKKEEVTFFAGKELRKNAYLKVKAKGKYVETWEEVKFEDMPDSVQSKLK.

Positions 1 to 29 (MKKAMAILAVLAAAAVICGLLFFHNDVTD) are cleaved as a signal peptide.

This is an uncharacterized protein from Bacillus subtilis (strain 168).